The sequence spans 115 residues: MQAQAPVVVVTQPGVGPGPAPQNSNWQTGMCDCFSDCGVCLCGTFCFPCLGCQVAADMNECCLCGTSVAMRTLYRTRYGIPGSICDDYMATLCCPHCTLCQIKRDINRRRAMRTF.

The protein belongs to the cornifelin family. Expressed at high levels in plasmacytoid dendritic cells. High expression in spleen, lymph nodes, peripheral blood leukocytes, and bone marrow, with lower expression in thymus, appendix, and fetal liver.

This chain is Placenta-specific gene 8 protein (PLAC8), found in Homo sapiens (Human).